The chain runs to 126 residues: Putative regulator AldR (126 aa).

This sequence belongs to the RutC family.

Functionally, implicated in the regulation of isoleucine biosynthesis. The polypeptide is Putative regulator AldR (aldR) (Lactococcus lactis subsp. lactis (strain IL1403) (Streptococcus lactis)).